The following is a 338-amino-acid chain: Glycerol-3-phosphate dehydrogenase [NAD(P)+] (338 aa).

NADPH-binding residues include W11, R30, and K109. 3 residues coordinate sn-glycerol 3-phosphate: K109, G143, and S145. A147 serves as a coordination point for NADPH. Residues K198, D251, S261, R262, and N263 each coordinate sn-glycerol 3-phosphate. K198 serves as the catalytic Proton acceptor. R262 contacts NADPH. NADPH contacts are provided by V286 and E288.

The protein belongs to the NAD-dependent glycerol-3-phosphate dehydrogenase family.

The protein resides in the cytoplasm. It catalyses the reaction sn-glycerol 3-phosphate + NAD(+) = dihydroxyacetone phosphate + NADH + H(+). The catalysed reaction is sn-glycerol 3-phosphate + NADP(+) = dihydroxyacetone phosphate + NADPH + H(+). It functions in the pathway membrane lipid metabolism; glycerophospholipid metabolism. In terms of biological role, catalyzes the reduction of the glycolytic intermediate dihydroxyacetone phosphate (DHAP) to sn-glycerol 3-phosphate (G3P), the key precursor for phospholipid synthesis. This chain is Glycerol-3-phosphate dehydrogenase [NAD(P)+], found in Cupriavidus necator (strain ATCC 17699 / DSM 428 / KCTC 22496 / NCIMB 10442 / H16 / Stanier 337) (Ralstonia eutropha).